A 369-amino-acid polypeptide reads, in one-letter code: Probable dual-specificity RNA methyltransferase RlmN (369 aa).

The active-site Proton acceptor is the E98. Residues S106–D341 form the Radical SAM core domain. Cysteines 113 and 346 form a disulfide. 3 residues coordinate [4Fe-4S] cluster: C120, C124, and C127. S-adenosyl-L-methionine-binding positions include G171–E172, S204, S227–H229, and N303. Catalysis depends on C346, which acts as the S-methylcysteine intermediate.

It belongs to the radical SAM superfamily. RlmN family. [4Fe-4S] cluster is required as a cofactor.

It is found in the cytoplasm. It carries out the reaction adenosine(2503) in 23S rRNA + 2 reduced [2Fe-2S]-[ferredoxin] + 2 S-adenosyl-L-methionine = 2-methyladenosine(2503) in 23S rRNA + 5'-deoxyadenosine + L-methionine + 2 oxidized [2Fe-2S]-[ferredoxin] + S-adenosyl-L-homocysteine. The enzyme catalyses adenosine(37) in tRNA + 2 reduced [2Fe-2S]-[ferredoxin] + 2 S-adenosyl-L-methionine = 2-methyladenosine(37) in tRNA + 5'-deoxyadenosine + L-methionine + 2 oxidized [2Fe-2S]-[ferredoxin] + S-adenosyl-L-homocysteine. Functionally, specifically methylates position 2 of adenine 2503 in 23S rRNA and position 2 of adenine 37 in tRNAs. In Chloroherpeton thalassium (strain ATCC 35110 / GB-78), this protein is Probable dual-specificity RNA methyltransferase RlmN.